The following is an 89-amino-acid chain: Small ribosomal subunit protein uS15 (89 aa).

This sequence belongs to the universal ribosomal protein uS15 family. In terms of assembly, part of the 30S ribosomal subunit. Forms a bridge to the 50S subunit in the 70S ribosome, contacting the 23S rRNA.

One of the primary rRNA binding proteins, it binds directly to 16S rRNA where it helps nucleate assembly of the platform of the 30S subunit by binding and bridging several RNA helices of the 16S rRNA. Its function is as follows. Forms an intersubunit bridge (bridge B4) with the 23S rRNA of the 50S subunit in the ribosome. The polypeptide is Small ribosomal subunit protein uS15 (Bdellovibrio bacteriovorus (strain ATCC 15356 / DSM 50701 / NCIMB 9529 / HD100)).